The following is a 943-amino-acid chain: UvrABC system protein A (943 aa).

31–38 (GLSGSGKS) contributes to the ATP binding site. The C4-type zinc-finger motif lies at 253–280 (CPHCGYSVPELEPRLFSFNNPAGACPTC). ABC transporter domains are found at residues 310–587 (WDRR…PHSI) and 607–937 (LDKK…RFLK). 640 to 647 (GVSGSGKS) provides a ligand contact to ATP. The segment at 740–766 (CEACQGDGVIKVEMHFLPDVYVPCEQC) adopts a C4-type zinc-finger fold.

It belongs to the ABC transporter superfamily. UvrA family. Forms a heterotetramer with UvrB during the search for lesions.

Its subcellular location is the cytoplasm. In terms of biological role, the UvrABC repair system catalyzes the recognition and processing of DNA lesions. UvrA is an ATPase and a DNA-binding protein. A damage recognition complex composed of 2 UvrA and 2 UvrB subunits scans DNA for abnormalities. When the presence of a lesion has been verified by UvrB, the UvrA molecules dissociate. The protein is UvrABC system protein A of Pasteurella multocida (strain Pm70).